A 125-amino-acid chain; its full sequence is Succinate dehydrogenase cytochrome b556 subunit (125 aa).

The Cytoplasmic segment spans residues 1–22 (MNAKRPVNLDLTKFHFPPMAIL). Residues 23 to 48 (SIGHRISGFVLFLCMPLMFYLLHRAT) form a helical membrane-spanning segment. Topologically, residues 49-65 (ASAESFYHLHQLLLHNG) are periplasmic. The chain crosses the membrane as a helical span at residues 66–86 (WIKLAVWIMLSATLFHLFAGI). Histidine 81 contacts heme. Topologically, residues 87–104 (RHLAMDLGFWESVPEGRI) are cytoplasmic. The chain crosses the membrane as a helical span at residues 105 to 125 (SAYTVFVVSFIAIVLAGVWIW).

Belongs to the cytochrome b560 family. As to quaternary structure, part of an enzyme complex containing four subunits: a flavoprotein, an iron-sulfur protein, plus two membrane-anchoring proteins, SdhC and SdhD. The complex can form homotrimers. Heme serves as cofactor.

It localises to the cell inner membrane. It functions in the pathway carbohydrate metabolism; tricarboxylic acid cycle. Its function is as follows. Membrane-anchoring subunit of succinate dehydrogenase (SDH). In Coxiella burnetii (strain RSA 493 / Nine Mile phase I), this protein is Succinate dehydrogenase cytochrome b556 subunit (sdhC).